The sequence spans 402 residues: tRNA pseudouridine synthase Pus10 (402 aa).

In terms of domain architecture, THUMP spans 37 to 159 (RLRGERLVEK…QIRVHVQINP (123 aa)). Asp-228 functions as the Nucleophile in the catalytic mechanism. Tyr-296 and Tyr-364 together coordinate substrate.

The protein belongs to the pseudouridine synthase Pus10 family.

The enzyme catalyses uridine(54) in tRNA = pseudouridine(54) in tRNA. It carries out the reaction uridine(55) in tRNA = pseudouridine(55) in tRNA. Responsible for synthesis of pseudouridine from uracil-54 and uracil-55 in the psi GC loop of transfer RNAs. This Methanothermobacter marburgensis (strain ATCC BAA-927 / DSM 2133 / JCM 14651 / NBRC 100331 / OCM 82 / Marburg) (Methanobacterium thermoautotrophicum) protein is tRNA pseudouridine synthase Pus10.